The chain runs to 257 residues: Snake venom serine protease KN9 (257 aa).

Residues 1-18 form the signal peptide; the sequence is MVLIRVLANLLILQLSYA. The propeptide occupies 19-24; sequence QKSSEL. The Peptidase S1 domain occupies 25–248; that stretch reads VVGGDECNIN…HLDWIKSIIA (224 aa). 5 disulfide bridges follow: C31-C162, C49-C65, C141-C209, C173-C188, and C199-C224. Catalysis depends on H64, which acts as the Charge relay system. N102 carries an N-linked (GlcNAc...) asparagine glycan. D109 functions as the Charge relay system in the catalytic mechanism. 2 N-linked (GlcNAc...) asparagine glycosylation sites follow: N120 and N121. S203 serves as the catalytic Charge relay system.

Belongs to the peptidase S1 family. Snake venom subfamily. Monomer. In terms of tissue distribution, expressed by the venom gland.

The protein localises to the secreted. Functionally, snake venom serine protease that may act in the hemostasis system of the prey. The protein is Snake venom serine protease KN9 of Trimeresurus stejnegeri (Chinese green tree viper).